We begin with the raw amino-acid sequence, 409 residues long: Serine/threonine transporter SstT (409 aa).

Transmembrane regions (helical) follow at residues 24 to 44, 48 to 68, 82 to 102, 142 to 162, 194 to 214, 218 to 238, 292 to 312, 319 to 339, and 365 to 385; these read LALGIVIGSVSPQLGLAAGLF, FVGALKAVAPVLVFILVAATI, IIVLYLIGTFSAALTAVIAGM, AIANANYIGILAWALVLGAAL, LGIFGLVSSTIAETGFGALAG, LLAVLLGCMAFIALVVNPAIV, IPLGATVNMGGAAITITVLAM, GIQVDFATALLLSLVATVSAC, and VAMQVVAVGFIIGVIQDSAET.

It belongs to the dicarboxylate/amino acid:cation symporter (DAACS) (TC 2.A.23) family.

The protein resides in the cell inner membrane. The enzyme catalyses L-serine(in) + Na(+)(in) = L-serine(out) + Na(+)(out). It catalyses the reaction L-threonine(in) + Na(+)(in) = L-threonine(out) + Na(+)(out). In terms of biological role, involved in the import of serine and threonine into the cell, with the concomitant import of sodium (symport system). This is Serine/threonine transporter SstT from Neisseria meningitidis serogroup C / serotype 2a (strain ATCC 700532 / DSM 15464 / FAM18).